The sequence spans 434 residues: Evolutionarily conserved signaling intermediate in Toll pathway, mitochondrial (434 aa).

Residues 1-48 (MSWVQVNLLARGLSRGWGSICRTVLSGTPFAQPSLQARGLHCSAVTHK) constitute a mitochondrion transit peptide. Residue lysine 371 forms a Glycyl lysine isopeptide (Lys-Gly) (interchain with G-Cter in ubiquitin) linkage. A disordered region spans residues 403–434 (TRLEGQSPPHSPPKGPEEDDEAIQAQQRQGQS).

This sequence belongs to the ECSIT family. Interacts with MAP3K1, SMAD4 and TRAF6. Interacts with SMAD1 only after BMP4-treatment. Part of the mitochondrial complex I assembly/MCIA complex that comprises at least the core subunits TMEM126B, NDUFAF1, ECSIT and ACAD9 and complement subunits such as COA1 and TMEM186. Interacts with NDUFAF1. Interacts with ACAD9. Interacts with TRIM59. Interacts with TMEM70 and TMEM242. Interacts (when ubiquitinated) with NF-kappa-B subunits RELA and NFKB1. Interacts with RIGI, IFIT1 and MAVS; these interactions promote RLR-mediated type I IFN induction. Interacts with SQSTM1; this interaction inhibits TLR4 signaling via functional regulation of the TRAF6-ECSIT complex. Interacts with cereblon/CRBN; this interaction inhibits the ubiquitination of ECSIT. Ubiquitinated on Lys-371; leading to translocation in the nucleus together with RELA and NFKB1 and expression of NF-kappa-B-dependent genes.

It localises to the cytoplasm. It is found in the nucleus. Its subcellular location is the mitochondrion. Functionally, adapter protein that plays a role in different signaling pathways including TLRs and IL-1 pathways or innate antiviral induction signaling. Plays a role in the activation of NF-kappa-B by forming a signal complex with TRAF6 and TAK1/MAP3K7 to activate TAK1/MAP3K7 leading to activation of IKKs. Once ubiquitinated, interacts with the dissociated RELA and NFKB1 proteins and translocates to the nucleus where it induces NF-kappa-B-dependent gene expression. Plays a role in innate antiviral immune response by bridging the pattern recognition receptors RIGI and MDA5/IFIT1 to the MAVS complex at the mitochondrion. Promotes proteolytic activation of MAP3K1. Involved in the BMP signaling pathway. Required for normal embryonic development. Its function is as follows. As part of the MCIA complex, involved in the assembly of the mitochondrial complex I. The chain is Evolutionarily conserved signaling intermediate in Toll pathway, mitochondrial from Rattus norvegicus (Rat).